We begin with the raw amino-acid sequence, 570 residues long: Arginine--tRNA ligase (570 aa).

A 'HIGH' region motif is present at residues 127–137 (ANPTGPLHLGH).

It belongs to the class-I aminoacyl-tRNA synthetase family. Monomer.

The protein localises to the cytoplasm. It catalyses the reaction tRNA(Arg) + L-arginine + ATP = L-arginyl-tRNA(Arg) + AMP + diphosphate. The protein is Arginine--tRNA ligase of Neorickettsia sennetsu (strain ATCC VR-367 / Miyayama) (Ehrlichia sennetsu).